A 44-amino-acid chain; its full sequence is Alpha-amylase inhibitor helianthamide (44 aa).

Cystine bridges form between Cys6/Cys38, Cys16/Cys33, and Cys20/Cys39. The inhibitory motif stretch occupies residues 7–10 (YIYH).

It belongs to the sea anemone alpha-amylase inhibitor family.

Its subcellular location is the secreted. Its function is as follows. Specific pancreatic alpha-amylase (AMY2A) inhibitor. The recombinant peptide inhibits human pancreatic (Ki=0.01 nM) and porcine pancreatic alpha-amylases (Ki=0.1 nM). This chain is Alpha-amylase inhibitor helianthamide, found in Stichodactyla helianthus (Sun anemone).